A 331-amino-acid polypeptide reads, in one-letter code: ESX-3 secretion system protein EccE3 (331 aa).

Helical transmembrane passes span 11–31 (GRVTLVLLAVVPVALAYPWQS) and 37–57 (LLGVAAAVVIGLFGFWRGLYF).

The protein belongs to the EccE family. In terms of assembly, part of the ESX-3 / type VII secretion system (T7SS), which is composed of cytosolic and membrane components. The ESX-3 membrane complex is composed of EccB3, EccC3, EccD3 and EccE3.

It is found in the cell inner membrane. Part of the ESX-3 specialized secretion system, which is important for iron and zinc uptake or homeostasis. The chain is ESX-3 secretion system protein EccE3 from Mycobacterium tuberculosis (strain ATCC 25618 / H37Rv).